Here is a 1218-residue protein sequence, read N- to C-terminus: MSKLKVVGEKSLTNSSRVVGLLAQLEKINTDSTESDTARYVTSKILHLAQSQEKTRREMTTKGSTGMEVLLSTLENTKDLQTVLNILSILIELVSSGGGRRASFLVAKGGSQILLQLLMNASKDSPPHEEVMVQTHSILAKIGPKDKKFGVKARVNGALTVTLNLVKQHFQNYRLVLPCLQLLRVYSTNSVNSVSLGKNGVVELMFKIIGPFSKKNSGLMKVALDTLAALLKSKTNARRAVDRGYVQVLLTIYVDWHRHDNRHRNMLIRKGILQSLKSVTNIKLGRKAFIDANGMKILYNTSQECLAVRTLDPLVNTSSLIMRKCFPKNRLPLPTIKSSFHFQLPIIPVTGPVAQLYSLPPEVDDVVDESDDNDDIDLEVENELENEDDLDQSFKNDDIETDINKLRPQQVPGRTIEELKMYEHLFPELVDDFQDYELISKEPKPFVFEGKARGPIVVPTAGEEVPGNSGSVKKGVVMKERASPKGEEAKEDPKGHDRTLPQQLGGQSRVAPSAHSFNNDLVKALDRITLQNVPSQVASGLNAGMRKDFGLPLTVLSCTKACPHVAKCGSTLFEGRTVHLGKLCCTGVETEDDEDTESHSSTEQAPSVEASDGPTLHDPDLYIEIVKNTKSVPEYSEVAYPDYFGHIPPPFKEPILERPYGVQRTKIAQDIERLIHQNDIIDRVVYDLDNPTYTTPEEGDTLKFNSKFESGNLRKVIQIRKSEYDLILNSDINSNHYHQWFYFEVSGMRPGVAYRFNIINCEKSNSQFNYGMQPLMYSVQEALNARPWWIRMGTDICYYKNHFSRSSVAAGGQKGKSYYTITFTVNFPHKDDVCYFAYHYPYTYSTLQMHLQKLESAHNPQQIYFRKDVLCETLSGNICPLVTITAMPESNYYEHICQFRTRPYIFLSARVHPGETNASWVMKGTLEYLMSNSPTAQSLRESYIFKIVPMLNPDGVINGNHRCSLSGEDLNRQWQSPNPELHPTIYHAKGLLQYLAAVKRLPLVYCDYHGHSRKKNVFMYGCSIKETVWHTHDNSASCDIVEDMGYRTLPKILSHIAPAFCMSSCSFVVEKSKESTARVVVWREIGVQRSYTMESTLCGCDQGRYKGLQIGTRELEEMGAKFCVGLLRLKRLTSSLEYNLPSNLLDFENDLIESSCKVTSPTTYVLDEDEPRFLEEVDYSAESNDELDVELAENTGDYEPSAQEEALSDSEVSRTHLI.

Disordered regions lie at residues Val-476 to Pro-512 and Thr-590 to His-617. Over residues Val-477 to Thr-499 the composition is skewed to basic and acidic residues. The Peptidase M14 domain occupies Tyr-840–Lys-1130. 3 residues coordinate Zn(2+): His-912, Glu-915, and His-1009. Glu-1094 functions as the Proton donor/acceptor in the catalytic mechanism. Ser-1160 is subject to Phosphoserine. The interval Glu-1193 to Ile-1218 is disordered.

It belongs to the peptidase M14 family. Interacts with MYLK. Requires Zn(2+) as cofactor. In terms of tissue distribution, widely expressed. Highly expressed in the cerebellum and cortex of adult mouse brain. Expressed at similar levels in both the cerebellum and the cortex throughout all developmental stages. Also expressed in sciatic nerve transection, spinal motor neurons undergoing axon regeneration, testis, heart, eye, lung, pancreas, intestine, stomach, pituitary, spleen, adrenal, kidney and in developing brain. Expression in cranial motor nuclei is the same as that observed in uninjured primary motor neurons. Expression is prevalent in sensory neurons and hippocampal CA3 neurons in addition to regenerating motor neurons.

It is found in the cytoplasm. The protein localises to the cytosol. It localises to the nucleus. The protein resides in the mitochondrion. It catalyses the reaction (L-glutamyl)(n+1)-gamma-L-glutamyl-L-glutamyl-[protein] + H2O = (L-glutamyl)(n)-gamma-L-glutamyl-L-glutamyl-[protein] + L-glutamate. The enzyme catalyses C-terminal L-alpha-aminoacyl-L-glutamyl-L-glutamyl-[tubulin] + H2O = C-terminal L-alpha-aminoacyl-L-glutamyl-[tubulin] + L-glutamate. Metallocarboxypeptidase that mediates protein deglutamylation of tubulin and non-tubulin target proteins. Catalyzes the removal of polyglutamate side chains present on the gamma-carboxyl group of glutamate residues within the C-terminal tail of alpha- and beta-tubulin. Specifically cleaves tubulin long-side-chains, while it is not able to remove the branching point glutamate. Also catalyzes the removal of polyglutamate residues from the carboxy-terminus of alpha-tubulin as well as non-tubulin proteins such as MYLK. Involved in KLF4 deglutamylation which promotes KLF4 proteasome-mediated degradation, thereby negatively regulating cell pluripotency maintenance and embryogenesis. This chain is Cytosolic carboxypeptidase 1, found in Mus musculus (Mouse).